Here is an 88-residue protein sequence, read N- to C-terminus: Small ribosomal subunit protein bS20 (88 aa).

Basic and acidic residues predominate over residues Met-1–Arg-17. A disordered region spans residues Met-1 to Lys-25.

It belongs to the bacterial ribosomal protein bS20 family.

In terms of biological role, binds directly to 16S ribosomal RNA. In Mycoplasma genitalium (strain ATCC 33530 / DSM 19775 / NCTC 10195 / G37) (Mycoplasmoides genitalium), this protein is Small ribosomal subunit protein bS20.